Here is a 528-residue protein sequence, read N- to C-terminus: Carboxysome shell carbonic anhydrase (528 aa).

Positions 17–47 (PIAPNPRWQKENPTAHGSTDTGGFGYNGGNE) are disordered. Zn(2+) is bound at residue Cys184. Catalysis depends on Asp186, which acts as the Proton acceptor. Residues His252 and Cys263 each coordinate Zn(2+).

This sequence belongs to the beta-class carbonic anhydrase family. CsoSCA subfamily. In terms of assembly, homodimer. The cofactor is Zn(2+).

The protein localises to the carboxysome. It carries out the reaction hydrogencarbonate + H(+) = CO2 + H2O. Its activity is regulated as follows. Inhibited by ethoxyzolamide and dithiothreitol (in crude extracts upon expression in E.coli). Functionally, reversible hydration of carbon dioxide. This bacteria encodes at least 3 CA enzymes. Essential for chemolithotrophic carbon dioxide fixation, supplies CO(2) to RuBisCO (ribulose bisphosphate carboxylase, cbbL-cbbS) in the carboxysome. In Hydrogenovibrio crunogenus (strain DSM 25203 / XCL-2) (Thiomicrospira crunogena), this protein is Carboxysome shell carbonic anhydrase.